The primary structure comprises 34 residues: MSDIN-like toxin proprotein 3 (34 aa).

A propeptide spanning residues 1 to 10 (MSDINTARLP) is cleaved from the precursor. A cross-link (cyclopeptide (Phe-Pro)) is located at residues 11–20 (FFQPPEFRPP). Residues 21-34 (CVGDDIEMVLTRGE) constitute a propeptide that is removed on maturation.

Belongs to the MSDIN fungal toxin family. Processed by the macrocyclase-peptidase enzyme POPB to yield a toxic cyclic decapeptide. POPB first removes 10 residues from the N-terminus. Conformational trapping of the remaining peptide forces the enzyme to release this intermediate rather than proceed to macrocyclization. The enzyme rebinds the remaining peptide in a different conformation and catalyzes macrocyclization of the N-terminal 10 residues.

Its function is as follows. Probable toxin that belongs to the MSDIN-like toxin family responsible for a large number of food poisoning cases and deaths. This is MSDIN-like toxin proprotein 3 from Amanita bisporigera (Destroying angel).